A 340-amino-acid chain; its full sequence is Phosphoribosylformylglycinamidine cyclo-ligase (340 aa).

The protein belongs to the AIR synthase family.

It localises to the cytoplasm. It carries out the reaction 2-formamido-N(1)-(5-O-phospho-beta-D-ribosyl)acetamidine + ATP = 5-amino-1-(5-phospho-beta-D-ribosyl)imidazole + ADP + phosphate + H(+). It functions in the pathway purine metabolism; IMP biosynthesis via de novo pathway; 5-amino-1-(5-phospho-D-ribosyl)imidazole from N(2)-formyl-N(1)-(5-phospho-D-ribosyl)glycinamide: step 2/2. This chain is Phosphoribosylformylglycinamidine cyclo-ligase, found in Streptococcus pneumoniae (strain Taiwan19F-14).